A 204-amino-acid chain; its full sequence is MTKSSRPQSISDSVSVAGSQGTLDDLRARVASVPEAPTREPVDSRDEQAWSYCLRLLTSRARTRAELTERLARRGYPDDVSERIMDRLATAGLVNDADFATQWVQSRHTYSGKGKRALAAELRTKGVSAENAAAALAQIDGEAERSRAAELVTKKLRSENLDDGGIKAARRLVAMLARRGYGQSMAYDVVKNALASEKDRRDVG.

Polar residues predominate over residues 1-22 (MTKSSRPQSISDSVSVAGSQGT). The disordered stretch occupies residues 1 to 44 (MTKSSRPQSISDSVSVAGSQGTLDDLRARVASVPEAPTREPVDS).

Belongs to the RecX family.

The protein localises to the cytoplasm. Functionally, modulates RecA activity. The protein is Regulatory protein RecX of Mycobacteroides abscessus (strain ATCC 19977 / DSM 44196 / CCUG 20993 / CIP 104536 / JCM 13569 / NCTC 13031 / TMC 1543 / L948) (Mycobacterium abscessus).